The primary structure comprises 242 residues: Anamorsin homolog (242 aa).

The segment at 1-140 is N-terminal SAM-like domain; that stretch reads MMNFADTLVI…NVTAENPDFL (140 aa). Residues 141-162 form a linker region; it reads SNEDDDEGNSSDGEAYQNAEDN. Positions 205, 208, 216, and 219 each coordinate [4Fe-4S] cluster. 2 short sequence motifs (cx2C motif) span residues 205 to 208 and 216 to 219; these read CGNC and CASC. The segment at 205–219 is fe-S binding site B; it reads CGNCYLGDAFRCASC.

The protein belongs to the anamorsin family. As to quaternary structure, monomer. It depends on [4Fe-4S] cluster as a cofactor.

The protein localises to the cytoplasm. Its subcellular location is the mitochondrion intermembrane space. In terms of biological role, component of the cytosolic iron-sulfur (Fe-S) protein assembly (CIA) machinery. Required for the maturation of extramitochondrial Fe-S proteins. Part of an electron transfer chain functioning in an early step of cytosolic Fe-S biogenesis, facilitating the de novo assembly of a [4Fe-4S] cluster on the cytosolic Fe-S scaffold complex. Electrons are transferred from NADPH via a FAD- and FMN-containing diflavin oxidoreductase. Together with the diflavin oxidoreductase, also required for the assembly of the diferric tyrosyl radical cofactor of ribonucleotide reductase (RNR), probably by providing electrons for reduction during radical cofactor maturation in the catalytic small subunit. This is Anamorsin homolog from Plasmodium knowlesi (strain H).